Consider the following 1078-residue polypeptide: Transmembrane protein 132B (1078 aa).

The Extracellular segment spans residues 1-903; the sequence is MFGAASRMDT…LTDLEIGMYA (903 aa). N-linked (GlcNAc...) asparagine glycosylation is found at asparagine 343, asparagine 366, and asparagine 381. Residues 834–887 form a disordered region; it reads RGTPVGQEESTNKSTTPQSPMEGKNKLLKSGGPDAFTSFPTQGKSPDPNNPSDL. Over residues 841 to 852 the composition is skewed to polar residues; it reads EESTNKSTTPQS. A helical transmembrane segment spans residues 904-924; it reads LLCVFCLAILVFLINCVAFAW. Over 925 to 1078 the chain is Cytoplasmic; that stretch reads KYRHKRFAVS…DYMESLQDQM (154 aa).

This sequence belongs to the TMEM132 family.

It is found in the membrane. This Homo sapiens (Human) protein is Transmembrane protein 132B (TMEM132B).